The sequence spans 200 residues: Recombination protein RecR (200 aa).

The C4-type zinc finger occupies 59–74; it reads CDICGNVCESSPCPVC. Positions 82-177 constitute a Toprim domain; sequence SVICVVEEPK…KVTRLASGLP (96 aa).

Belongs to the RecR family.

Its function is as follows. May play a role in DNA repair. It seems to be involved in an RecBC-independent recombinational process of DNA repair. It may act with RecF and RecO. This chain is Recombination protein RecR, found in Bifidobacterium longum subsp. infantis (strain ATCC 15697 / DSM 20088 / JCM 1222 / NCTC 11817 / S12).